The sequence spans 396 residues: Pectinesterase (396 aa).

The first 21 residues, 1–21 (MQSKTLYLKATALLGGCTVFA), serve as a signal peptide directing secretion. Threonine 174 contributes to the substrate binding site. Aspartate 232 acts as the Proton donor in catalysis. Catalysis depends on aspartate 259, which acts as the Nucleophile. Substrate-binding residues include arginine 324 and tryptophan 326.

It belongs to the pectinesterase family.

The protein resides in the secreted. The enzyme catalyses [(1-&gt;4)-alpha-D-galacturonosyl methyl ester](n) + n H2O = [(1-&gt;4)-alpha-D-galacturonosyl](n) + n methanol + n H(+). The protein operates within glycan metabolism; pectin degradation; 2-dehydro-3-deoxy-D-gluconate from pectin: step 1/5. In terms of biological role, involved in maceration and soft-rotting of plant tissue. The chain is Pectinesterase (pme) from Ralstonia nicotianae (strain ATCC BAA-1114 / GMI1000) (Ralstonia solanacearum).